The sequence spans 358 residues: Chorismate synthase (358 aa).

Residue Arg46 coordinates NADP(+). FMN contacts are provided by residues 123–125 (RSS), 235–236 (NA), Gly275, 290–294 (KPTPS), and Arg316.

This sequence belongs to the chorismate synthase family. As to quaternary structure, homotetramer. FMNH2 serves as cofactor.

It catalyses the reaction 5-O-(1-carboxyvinyl)-3-phosphoshikimate = chorismate + phosphate. The protein operates within metabolic intermediate biosynthesis; chorismate biosynthesis; chorismate from D-erythrose 4-phosphate and phosphoenolpyruvate: step 7/7. In terms of biological role, catalyzes the anti-1,4-elimination of the C-3 phosphate and the C-6 proR hydrogen from 5-enolpyruvylshikimate-3-phosphate (EPSP) to yield chorismate, which is the branch point compound that serves as the starting substrate for the three terminal pathways of aromatic amino acid biosynthesis. This reaction introduces a second double bond into the aromatic ring system. This Sulfurimonas denitrificans (strain ATCC 33889 / DSM 1251) (Thiomicrospira denitrificans (strain ATCC 33889 / DSM 1251)) protein is Chorismate synthase.